Consider the following 177-residue polypeptide: Glutamyl-tRNA(Gln) amidotransferase subunit F, mitochondrial (177 aa).

Residues 1 to 16 (MIRINSRGLTVSTRRF) constitute a mitochondrion transit peptide. Positions 148-177 (PAKGETQGSFNVANMNPRNRPFATIRSKQG) are disordered. Residues 153 to 164 (TQGSFNVANMNP) are compositionally biased toward polar residues.

It belongs to the GatF family. As to quaternary structure, subunit of the heterotrimeric GatFAB amidotransferase (AdT) complex, composed of A, B and F subunits.

The protein localises to the mitochondrion inner membrane. The enzyme catalyses L-glutamyl-tRNA(Gln) + L-glutamine + ATP + H2O = L-glutaminyl-tRNA(Gln) + L-glutamate + ADP + phosphate + H(+). Its function is as follows. Allows the formation of correctly charged Gln-tRNA(Gln) through the transamidation of misacylated Glu-tRNA(Gln) in the mitochondria. The reaction takes place in the presence of glutamine and ATP through an activated gamma-phospho-Glu-tRNA(Gln). Required for proper protein synthesis within the mitochondrion. The polypeptide is Glutamyl-tRNA(Gln) amidotransferase subunit F, mitochondrial (Scheffersomyces stipitis (strain ATCC 58785 / CBS 6054 / NBRC 10063 / NRRL Y-11545) (Yeast)).